The chain runs to 149 residues: MERTFIMIKPDGVQRQLIGEIVGRFEKKGFKLVAMKVMTVSQELAEKHYEALNDKPFFSGLVNFICSSPVVAMVWEGNSIVSTSRQMIGATDPHAAAPGTIRGDYGVSVGRNIIHGSDAIETAKREISLWFKDEEVNEWDATLNPWLYE.

Positions 9, 57, 85, 91, 102, and 112 each coordinate ATP. His115 (pros-phosphohistidine intermediate) is an active-site residue.

It belongs to the NDK family. In terms of assembly, homotetramer. Mg(2+) is required as a cofactor.

The protein resides in the cytoplasm. The enzyme catalyses a 2'-deoxyribonucleoside 5'-diphosphate + ATP = a 2'-deoxyribonucleoside 5'-triphosphate + ADP. The catalysed reaction is a ribonucleoside 5'-diphosphate + ATP = a ribonucleoside 5'-triphosphate + ADP. Its function is as follows. Major role in the synthesis of nucleoside triphosphates other than ATP. The ATP gamma phosphate is transferred to the NDP beta phosphate via a ping-pong mechanism, using a phosphorylated active-site intermediate. In Synechocystis sp. (strain ATCC 27184 / PCC 6803 / Kazusa), this protein is Nucleoside diphosphate kinase.